Reading from the N-terminus, the 820-residue chain is Scavenger receptor class F member 1 (820 aa).

A signal peptide spans 1–23; that stretch reads MLAAMGLELVFSLLLLWTQGTQG. Residues 24–422 lie on the Extracellular side of the membrane; that stretch reads STLDPAGQHV…TCQLGRHGKN (399 aa). EGF-like domains follow at residues 56-90, 98-133, 163-193, and 217-251; these read TIPI…AQCS, WGHD…RLCE, RRPC…RRCS, and WGPE…IRCE. 12 disulfide bridges follow: C60/C72, C66/C78, C80/C89, C102/C114, C108/C121, C123/C132, C166/C174, C168/C181, C183/C192, C221/C232, C225/C239, and C241/C250. N291 carries an N-linked (GlcNAc...) asparagine glycan. EGF-like domains lie at 304-341 and 353-384; these read FGER…HRCE and CSST…TSCN. The chain crosses the membrane as a helical span at residues 423-443; the sequence is ALIVGILVPLLLLLMGIVCCA. Residues 444–820 lie on the Cytoplasmic side of the membrane; that stretch reads YCCSGTRLDP…VVPMSVPPQH (377 aa). Disordered stretches follow at residues 549 to 685 and 715 to 820; these read PMAQ…IQES and NYQK…PPQH. S590 and S607 each carry phosphoserine. The span at 631–648 shows a compositional bias: acidic residues; that stretch reads QEAEESTGPEQVNTEEDA. Residues 650-662 are compositionally biased toward polar residues; that stretch reads TATSSGDPATSHG.

As to quaternary structure, heterophilic interaction with SREC2 via its extracellular domain. The heterophilic interaction is suppressed by the presence of ligand such as Ac-LDL. Interacts with AVIL; the interaction occurs in embryonic dorsal root ganglions at 18 dpc and induces neurite-like outgrowth. Expressed weakly in brain, spinal cord and dorsal root ganglions.

It localises to the membrane. Mediates the binding and degradation of acetylated low density lipoprotein (Ac-LDL). Mediates heterophilic interactions, suggesting a function as adhesion protein. Plays a role in the regulation of neurite-like outgrowth. This Mus musculus (Mouse) protein is Scavenger receptor class F member 1 (Scarf1).